The primary structure comprises 86 residues: Small ribosomal subunit protein uS17 (86 aa).

Belongs to the universal ribosomal protein uS17 family. As to quaternary structure, part of the 30S ribosomal subunit.

In terms of biological role, one of the primary rRNA binding proteins, it binds specifically to the 5'-end of 16S ribosomal RNA. The sequence is that of Small ribosomal subunit protein uS17 from Lactococcus lactis subsp. cremoris (strain MG1363).